The primary structure comprises 93 residues: uncharacterized protein (93 aa).

A helical transmembrane segment spans residues 12–32 (VVGGLSFWTFSAGLIMIVNAL). Residues 47 to 66 (TANANGSDDDNENKNNSYRS) form a disordered region.

The protein localises to the cell membrane. This is an uncharacterized protein from Mycoplasma genitalium (strain ATCC 33530 / DSM 19775 / NCTC 10195 / G37) (Mycoplasmoides genitalium).